The chain runs to 311 residues: Pyrimidine-specific ribonucleoside hydrolase RihA (311 aa).

Residue His-240 is part of the active site.

Belongs to the IUNH family. RihA subfamily.

In terms of biological role, hydrolyzes with equal efficiency cytidine or uridine to ribose and cytosine or uracil, respectively. The chain is Pyrimidine-specific ribonucleoside hydrolase RihA from Escherichia coli O81 (strain ED1a).